A 367-amino-acid chain; its full sequence is Anhydro-N-acetylmuramic acid kinase (367 aa).

Position 13-20 (13-20 (GTSMDGAD)) interacts with ATP.

Belongs to the anhydro-N-acetylmuramic acid kinase family.

It catalyses the reaction 1,6-anhydro-N-acetyl-beta-muramate + ATP + H2O = N-acetyl-D-muramate 6-phosphate + ADP + H(+). Its pathway is amino-sugar metabolism; 1,6-anhydro-N-acetylmuramate degradation. It functions in the pathway cell wall biogenesis; peptidoglycan recycling. In terms of biological role, catalyzes the specific phosphorylation of 1,6-anhydro-N-acetylmuramic acid (anhMurNAc) with the simultaneous cleavage of the 1,6-anhydro ring, generating MurNAc-6-P. Is required for the utilization of anhMurNAc either imported from the medium or derived from its own cell wall murein, and thus plays a role in cell wall recycling. The sequence is that of Anhydro-N-acetylmuramic acid kinase from Neisseria meningitidis serogroup C / serotype 2a (strain ATCC 700532 / DSM 15464 / FAM18).